The following is a 166-amino-acid chain: MFKQLIKTTLTNSRSFSTNTGSGSKIGNIIGKIGIGKLNHVAIATPNLQESMDLYKNVFGADVSEPVNQVEHGVTTVFVGLENTKIELLHPFGDKSPIENFLKKNPSGGIHHICLEVDDIHHAVKTLLAENVRIIDPTPKIGAHGKPVVFLHPKSMNGVLVELEEK.

The N-terminal 23 residues, 1 to 23 (MFKQLIKTTLTNSRSFSTNTGSG), are a transit peptide targeting the mitochondrion. A VOC domain is found at 37–166 (KLNHVAIATP…NGVLVELEEK (130 aa)). Co(2+) is bound by residues His40, His112, and Glu162.

It belongs to the methylmalonyl-CoA epimerase family.

The protein localises to the mitochondrion. It carries out the reaction (R)-methylmalonyl-CoA = (S)-methylmalonyl-CoA. Its function is as follows. Methylmalonyl-CoA epimerase involved in propionyl-CoA metabolism. This chain is Methylmalonyl-CoA epimerase, mitochondrial (mcee), found in Dictyostelium discoideum (Social amoeba).